Consider the following 496-residue polypeptide: MIKHNPPSPEPLHRAIARFGGVTVLVVGDLILDRFVNGVIERISPEAPIPVLHGRGETSAMGGAGNVVANIVSLGARAIPVSVIGTDTAGDSLVRMLAELGAETAGLSQQRGRMTSSKSRFSALNQQVLRFDEEEIKPLDETERAGLIRHFRAALAGAEIVILSDYGKGILLDGVAAELIAICREAGKPVLVDPKGRDYARYAGATAITPNRKELGEAVGHAVFADDEIVAAARELISAHGFDFVVATRSEKGMSVVGPDEARHIATQAREVFDVSGAGDTVIATFALALASGADPVAAASIANAAGGVVVGKRGTARLTVEELTGALFRSHGPTAHKDAILDASSAARMVAAWKEEGLSVGFTNGCFDILHAGHVSLLHAARSQCDRLVLGLNSDASVRRLKGPGRPVNDQHDRACVLAALASVDAVVVFEEDTPLALIEALLPDILVKGADYTIDTVVGADVVQKAGGRVVLVDLVAGKSTTGTIGKLRAGSTS.

The ribokinase stretch occupies residues 1–335 (MIKHNPPSPE…GALFRSHGPT (335 aa)). An ATP-binding site is contributed by 211 to 214 (NRKE). Residue D280 is part of the active site. The tract at residues 363–496 (FTNGCFDILH…IGKLRAGSTS (134 aa)) is cytidylyltransferase.

The protein in the N-terminal section; belongs to the carbohydrate kinase PfkB family. In the C-terminal section; belongs to the cytidylyltransferase family. As to quaternary structure, homodimer.

It catalyses the reaction D-glycero-beta-D-manno-heptose 7-phosphate + ATP = D-glycero-beta-D-manno-heptose 1,7-bisphosphate + ADP + H(+). It carries out the reaction D-glycero-beta-D-manno-heptose 1-phosphate + ATP + H(+) = ADP-D-glycero-beta-D-manno-heptose + diphosphate. It functions in the pathway nucleotide-sugar biosynthesis; ADP-L-glycero-beta-D-manno-heptose biosynthesis; ADP-L-glycero-beta-D-manno-heptose from D-glycero-beta-D-manno-heptose 7-phosphate: step 1/4. The protein operates within nucleotide-sugar biosynthesis; ADP-L-glycero-beta-D-manno-heptose biosynthesis; ADP-L-glycero-beta-D-manno-heptose from D-glycero-beta-D-manno-heptose 7-phosphate: step 3/4. Its function is as follows. Catalyzes the phosphorylation of D-glycero-D-manno-heptose 7-phosphate at the C-1 position to selectively form D-glycero-beta-D-manno-heptose-1,7-bisphosphate. Catalyzes the ADP transfer from ATP to D-glycero-beta-D-manno-heptose 1-phosphate, yielding ADP-D-glycero-beta-D-manno-heptose. The sequence is that of Bifunctional protein HldE from Mesorhizobium japonicum (strain LMG 29417 / CECT 9101 / MAFF 303099) (Mesorhizobium loti (strain MAFF 303099)).